A 176-amino-acid chain; its full sequence is dCTP deaminase (176 aa).

DCTP contacts are provided by residues 102-107 (RSTFAR) and Asp118. Glu128 acts as the Proton donor/acceptor in catalysis. DCTP-binding residues include Tyr160 and Gln167.

Belongs to the dCTP deaminase family. Homotrimer.

The enzyme catalyses dCTP + H2O + H(+) = dUTP + NH4(+). It functions in the pathway pyrimidine metabolism; dUMP biosynthesis; dUMP from dCTP (dUTP route): step 1/2. Its function is as follows. Catalyzes the deamination of dCTP to dUTP. The chain is dCTP deaminase from Hyperthermus butylicus (strain DSM 5456 / JCM 9403 / PLM1-5).